We begin with the raw amino-acid sequence, 163 residues long: Secretory-abundant heat soluble protein 53582 (163 aa).

A signal peptide spans 1–19 (MARLFVAVALFGVVAFAAA). The segment at 22-51 (EWTGKTWLGSWASTDRAENWEAFVDALGLP) is SAHS-c1. Residues 67–95 (YKQGDKYHHEVSIPSKNFKKAIEYTLGTE) form an SAHS-c2 region. Residues 108 to 157 (KYTEDGEKLVADVQIPSKNKQIHDIYEVQGDTLTKTYKVGDVVAKRWFTR) are SAHS-c3.

Belongs to the Secretory-abundant heat soluble protein (SAHS) family.

The protein localises to the secreted. Functionally, secreted heat soluble protein acting as a molecular shield in water-deficient condition. Tardigrade-specific intrinsically disordered proteins (TDPs) are essential for desiccation tolerance by forming non-crystalline amorphous solids upon desiccation, and this vitrified state mirrors their protective capabilities. This is Secretory-abundant heat soluble protein 53582 from Hypsibius exemplaris (Freshwater tardigrade).